The primary structure comprises 339 residues: Phenylalanine--tRNA ligase alpha subunit (339 aa).

Glu254 serves as a coordination point for Mg(2+).

Belongs to the class-II aminoacyl-tRNA synthetase family. Phe-tRNA synthetase alpha subunit type 1 subfamily. As to quaternary structure, tetramer of two alpha and two beta subunits. Requires Mg(2+) as cofactor.

It localises to the cytoplasm. The enzyme catalyses tRNA(Phe) + L-phenylalanine + ATP = L-phenylalanyl-tRNA(Phe) + AMP + diphosphate + H(+). The chain is Phenylalanine--tRNA ligase alpha subunit from Clostridium tetani (strain Massachusetts / E88).